We begin with the raw amino-acid sequence, 308 residues long: Olfactory receptor 2T6 (308 aa).

The Extracellular segment spans residues 1–28 (MNENNETLTRGFTLMGLFTHNKCSGFFF). A glycan (N-linked (GlcNAc...) asparagine) is linked at N5. A helical transmembrane segment spans residues 29–49 (GVICAVFFMAMIANGVMIFLI). At 50-57 (NIDPHLHT) the chain is on the cytoplasmic side. A helical transmembrane segment spans residues 58–78 (PMYFLLSHLSVIDTLYISTIV). Over 79–98 (PKMLVDYLMGEGTISFIACT) the chain is Extracellular. C97 and C179 form a disulfide bridge. A helical transmembrane segment spans residues 99–119 (AQCFLYMGFMGAEFFLLGLMA). Over 120–145 (YDRYVAICNPLRYPVLISWRVCWMIL) the chain is Cytoplasmic. The chain crosses the membrane as a helical span at residues 146–166 (ASSWFGGALDSFLLTPITMSL). At 167–203 (PFCASHQINHFFCEAPTMLRLACGDKTTYETVMYVCC) the chain is on the extracellular side. The helical transmembrane segment at 204 to 224 (VAMLLIPFSVVTASYTRILIT) threads the bilayer. Residues 225 to 236 (VHQMTSAEGRKK) lie on the Cytoplasmic side of the membrane. The helical transmembrane segment at 237 to 257 (AFATCSSHMMVVTLFYGAALY) threads the bilayer. Residues 258-271 (TYTLPQSYHTPIKD) are Extracellular-facing. The helical transmembrane segment at 272-292 (KVFSAFYTILTPLLNPLIYSL) threads the bilayer. The Cytoplasmic segment spans residues 293–308 (RNRDVMGALKRVVARC).

The protein belongs to the G-protein coupled receptor 1 family.

The protein resides in the cell membrane. Its function is as follows. Odorant receptor. The protein is Olfactory receptor 2T6 (OR2T6) of Homo sapiens (Human).